The following is a 275-amino-acid chain: Phosphate import ATP-binding protein PstB 2 (275 aa).

In terms of domain architecture, ABC transporter spans 29-270 (LEVKNLNIYY…PSEKKTEDYI (242 aa)). ATP is bound at residue 61 to 68 (GPSGCGKS).

The protein belongs to the ABC transporter superfamily. Phosphate importer (TC 3.A.1.7) family. The complex is composed of two ATP-binding proteins (PstB), two transmembrane proteins (PstC and PstA) and a solute-binding protein (PstS).

It localises to the cell membrane. It carries out the reaction phosphate(out) + ATP + H2O = ADP + 2 phosphate(in) + H(+). Its function is as follows. Part of the ABC transporter complex PstSACB involved in phosphate import. Responsible for energy coupling to the transport system. This is Phosphate import ATP-binding protein PstB 2 from Bacillus licheniformis (strain ATCC 14580 / DSM 13 / JCM 2505 / CCUG 7422 / NBRC 12200 / NCIMB 9375 / NCTC 10341 / NRRL NRS-1264 / Gibson 46).